The primary structure comprises 321 residues: uncharacterized protein (321 aa).

The 58-residue stretch at 1-58 folds into the HTH lysR-type domain; sequence MTPAQLRAYSAVVRLGSVRAAAAELGLSDAGVSMHVAALRKELDDPLFTRTGAGLAFT. Residues 18–37 constitute a DNA-binding region (H-T-H motif); sequence VRAAAAELGLSDAGVSMHVA.

Belongs to the LysR transcriptional regulatory family.

This is an uncharacterized protein from Mycobacterium tuberculosis (strain CDC 1551 / Oshkosh).